We begin with the raw amino-acid sequence, 397 residues long: Histidinol-phosphate aminotransferase (397 aa).

K247 carries the N6-(pyridoxal phosphate)lysine modification.

This sequence belongs to the class-II pyridoxal-phosphate-dependent aminotransferase family. Histidinol-phosphate aminotransferase subfamily. Homodimer. Requires pyridoxal 5'-phosphate as cofactor.

It carries out the reaction L-histidinol phosphate + 2-oxoglutarate = 3-(imidazol-4-yl)-2-oxopropyl phosphate + L-glutamate. The protein operates within amino-acid biosynthesis; L-histidine biosynthesis; L-histidine from 5-phospho-alpha-D-ribose 1-diphosphate: step 7/9. This is Histidinol-phosphate aminotransferase from Frankia casuarinae (strain DSM 45818 / CECT 9043 / HFP020203 / CcI3).